The chain runs to 212 residues: Pyrrolidone-carboxylate peptidase (212 aa).

Residues Glu-80, Cys-143, and His-165 contribute to the active site.

Belongs to the peptidase C15 family. In terms of assembly, homotetramer.

The protein resides in the cytoplasm. The catalysed reaction is Release of an N-terminal pyroglutamyl group from a polypeptide, the second amino acid generally not being Pro.. In terms of biological role, removes 5-oxoproline from various penultimate amino acid residues except L-proline. In Vibrio campbellii (strain ATCC BAA-1116), this protein is Pyrrolidone-carboxylate peptidase.